The primary structure comprises 92 residues: Small ribosomal subunit protein uS19 (92 aa).

The protein belongs to the universal ribosomal protein uS19 family.

Functionally, protein S19 forms a complex with S13 that binds strongly to the 16S ribosomal RNA. This Rhodopseudomonas palustris (strain HaA2) protein is Small ribosomal subunit protein uS19.